The chain runs to 556 residues: MSSSINGLNESEGSTPLSTASIIGSSEQLYMTHDERYLDVLQQYEVETENKRDFDLEEEQWGVLSGSCVDGTYWSAEEKELFFQAVARNGKRDLDLIAYSIPSKSAVQIERYINALENELRWLRNHVDASVRSQCLLKYEDIPIAMEMSQNWIDWEEKIAERLLEGSNISGVETSHYNAQSVKNKTSNEDLFDTNEMRKISERFYHFDRQAPFPSNPLSAGATEFLLQIIKSKLKELIGTSIFLAESRFRKLEANNAFHRKPIIKNRDVVLSGKFLRFHRFNIPGFWKYLPTRQKMNVYKRNKRLKFQNYIHIMESDERQSKLKLGRVRARKTKNNENTMFFDSKEHSTDESDGNLGEHDVKRKVDSVPADETSINGFKKSVNQAEYPDNAQMFMDESVAEESLVEIDDSVEAYDMIQSKNYESFVWKYVLHLTDEMSTEDALFETIPLSNLLAQKRMKDKLKGSDVFTTLKITSKSLHNIDEHSDSDDEVQPICYYYKDPVVSHAPGAAEVVSELESGYVGLISYDLSNLPNSTEDPERKLAKPVSSWELSLPLK.

In terms of assembly, component of the UAF (upstream activation factor) complex which consists of spp27/uaf30, rrn5, rrn10, and histones H3 and H4. Interacts with rrn10.

It localises to the nucleus. The protein resides in the nucleolus. Component of the UAF (upstream activation factor) complex which interacts with the upstream element of the RNA polymerase I promoter and forms a stable preinitiation complex. UAF seems to stimulate basal transcription to a fully activated level. The polypeptide is RNA polymerase I-specific transcription initiation factor rrn5 (rrn5) (Schizosaccharomyces pombe (strain 972 / ATCC 24843) (Fission yeast)).